Consider the following 136-residue polypeptide: Ribonuclease P protein component (136 aa).

The disordered stretch occupies residues 39–59; the sequence is LPDVSSSKPARDTGAEQTSAP.

This sequence belongs to the RnpA family. Consists of a catalytic RNA component (M1 or rnpB) and a protein subunit.

The enzyme catalyses Endonucleolytic cleavage of RNA, removing 5'-extranucleotides from tRNA precursor.. RNaseP catalyzes the removal of the 5'-leader sequence from pre-tRNA to produce the mature 5'-terminus. It can also cleave other RNA substrates such as 4.5S RNA. The protein component plays an auxiliary but essential role in vivo by binding to the 5'-leader sequence and broadening the substrate specificity of the ribozyme. The chain is Ribonuclease P protein component from Salinispora tropica (strain ATCC BAA-916 / DSM 44818 / JCM 13857 / NBRC 105044 / CNB-440).